We begin with the raw amino-acid sequence, 77 residues long: Defensin-like protein 161 (77 aa).

A signal peptide spans 1–27; sequence MAKLSCSYLLVFMLVFSAILMVEKVEG. 4 disulfide bridges follow: cysteine 30/cysteine 77, cysteine 40/cysteine 59, cysteine 45/cysteine 71, and cysteine 49/cysteine 73.

This sequence belongs to the DEFL family.

It localises to the secreted. The chain is Defensin-like protein 161 (LCR27) from Arabidopsis thaliana (Mouse-ear cress).